Here is a 353-residue protein sequence, read N- to C-terminus: C-C chemokine receptor type 8 (353 aa).

The Extracellular segment spans residues 1–33; sequence MDYTMEPNVTMTDYYPDFFTAPCDAEFLLRGSM. A glycan (N-linked (GlcNAc...) asparagine) is linked at asparagine 8. A helical transmembrane segment spans residues 34 to 61; sequence LYLAILYCVLFVLGLLGNSLVILVLVGC. At 62 to 71 the chain is on the cytoplasmic side; it reads KKLRSITDIY. Residues 72-91 form a helical membrane-spanning segment; that stretch reads LLNLAASDLLFVLSIPFQTH. Residues 92–105 lie on the Extracellular side of the membrane; sequence NLLDQWVFGTAMCK. A disulfide bridge connects residues cysteine 104 and cysteine 181. The helical transmembrane segment at 106–127 threads the bilayer; the sequence is VVSGLYYIGFFSSMFFITLMSV. The Cytoplasmic portion of the chain corresponds to 128 to 144; it reads DRYLAIVHAVYAIKVRT. Residues 145 to 169 traverse the membrane as a helical segment; it reads ASVGTALSLTVWLAAVTATIPLMVF. Topologically, residues 170–200 are extracellular; the sequence is YQVASEDGMLQCFQFYEEQSLRWKLFTHFEI. Residues 201–220 form a helical membrane-spanning segment; it reads NALGLLLPFAILLFCYVRIL. The Cytoplasmic segment spans residues 221-236; that stretch reads QQLRGCLNHNRTRAIK. A helical membrane pass occupies residues 237-261; the sequence is LVLTVVIVSLLFWVPFNVALFLTSL. At 262–278 the chain is on the extracellular side; sequence HDLHILDGCATRQRLAL. Residues 279–302 traverse the membrane as a helical segment; that stretch reads AIHVTEVISFTHCCVNPVIYAFIG. The Cytoplasmic portion of the chain corresponds to 303–353; it reads EKFKKHLMDVFQKSCSHIFLYLGRQMPVGALERQLSSNQRSSHSSTLDDIL.

It belongs to the G-protein coupled receptor 1 family. Expressed in thymus.

The protein resides in the cell membrane. Its function is as follows. Receptor for the CCL1/SCY1/TCA-3 chemokine. The polypeptide is C-C chemokine receptor type 8 (Ccr8) (Mus musculus (Mouse)).